Here is a 266-residue protein sequence, read N- to C-terminus: Cell wall synthesis protein Wag31 (266 aa).

A coiled-coil region spans residues 31–64; sequence FLDLVENELTQLIEENSDLRQRIEELDHELAAGG. Threonine 77 is subject to Phosphothreonine. Residues 152-203 adopt a coiled-coil conformation; the sequence is TAEATVAEAQQRADAMLADAQTRSEVQSRQAQEKADALQAEAERKHSEIMGA. Positions 239 to 266 are disordered; the sequence is ELGQRGSAAPVDSNADAGGFDQFNRGNN.

This sequence belongs to the DivIVA family. In terms of assembly, forms homooligomers. In terms of processing, phosphorylated by PknA.

It is found in the cytoplasm. Important for maintaining cell shape and cell wall integrity by localizing peptidoglycan synthesis to the cell poles. The protein is Cell wall synthesis protein Wag31 (wag31) of Mycobacterium leprae (strain TN).